Here is a 271-residue protein sequence, read N- to C-terminus: 3-methyl-2-oxobutanoate hydroxymethyltransferase (271 aa).

Mg(2+)-binding residues include aspartate 53 and aspartate 92. Residues aspartate 53–serine 54, aspartate 92, and lysine 120 each bind 3-methyl-2-oxobutanoate. Glutamate 122 is a Mg(2+) binding site. Glutamate 189 acts as the Proton acceptor in catalysis.

Belongs to the PanB family. Homodecamer; pentamer of dimers. It depends on Mg(2+) as a cofactor.

It localises to the cytoplasm. It carries out the reaction 3-methyl-2-oxobutanoate + (6R)-5,10-methylene-5,6,7,8-tetrahydrofolate + H2O = 2-dehydropantoate + (6S)-5,6,7,8-tetrahydrofolate. Its pathway is cofactor biosynthesis; (R)-pantothenate biosynthesis; (R)-pantoate from 3-methyl-2-oxobutanoate: step 1/2. Functionally, catalyzes the reversible reaction in which hydroxymethyl group from 5,10-methylenetetrahydrofolate is transferred onto alpha-ketoisovalerate to form ketopantoate. The protein is 3-methyl-2-oxobutanoate hydroxymethyltransferase of Paraburkholderia xenovorans (strain LB400).